The primary structure comprises 68 residues: Conotoxin Mr3.3 (68 aa).

The first 19 residues, 1–19 (MSRLGVLLTICLLLFPLTA), serve as a signal peptide directing secretion. The propeptide occupies 20–51 (VPLDGDQPADRPAERLQDDISSEHHPHFDSGR). Residues 22–46 (LDGDQPADRPAERLQDDISSEHHPH) are disordered. Residues 27-46 (PADRPAERLQDDISSEHHPH) are compositionally biased toward basic and acidic residues. Disulfide bonds link cysteine 53–cysteine 67, cysteine 54–cysteine 63, and cysteine 59–cysteine 66. At proline 65 the chain carries 4-hydroxyproline.

The protein belongs to the conotoxin M superfamily. Expressed by the venom duct.

The protein localises to the secreted. In Conus marmoreus (Marble cone), this protein is Conotoxin Mr3.3.